The chain runs to 397 residues: 2,6-dihydroxypyridine 3-monooxygenase (397 aa).

Residues 14–16 (SIS), 35–36 (ER), valine 49, leucine 120, aspartate 306, and 316–320 (AAGGA) each bind FAD.

As to quaternary structure, homodimer. The cofactor is FAD.

The catalysed reaction is 2,6-dihydroxypyridine + NADH + O2 + H(+) = 2,3,6-trihydroxypyridine + NAD(+) + H2O. It functions in the pathway alkaloid degradation; nicotine degradation. Its function is as follows. Catalyzes the conversion of 2,6-dihydroxypyridine into 2,3,6-trihydroxypyridine in the nicotine degradation pathway. This chain is 2,6-dihydroxypyridine 3-monooxygenase (dhpH), found in Paenarthrobacter nicotinovorans (Arthrobacter nicotinovorans).